A 64-amino-acid chain; its full sequence is Large ribosomal subunit protein bL35 (64 aa).

This sequence belongs to the bacterial ribosomal protein bL35 family.

This chain is Large ribosomal subunit protein bL35, found in Ureaplasma parvum serovar 3 (strain ATCC 27815 / 27 / NCTC 11736).